Consider the following 506-residue polypeptide: Epstein-Barr nuclear antigen leader protein (506 aa).

Disordered stretches follow at residues 1–470 (MGDR…PRPP) and 485–506 (FEPPTVTTQRQSVYIEEEEDED). Position 35 is a phosphoserine; by host (Ser35).

It belongs to the lymphocryptovirus EBNA-LP family. In terms of assembly, homooligomer. Interacts with host SP100; this interaction is important for EBNA-LP coactivator activity. Interacts with host HAX1, ERR1 and HSPA2. Interacts with host PRKDC and AKAP8L; these interactions modulate the coactivator function of EBNA-LP. Phosphorylated by the cellular protein kinase cdc2.

Its subcellular location is the host nucleus. Plays an important role in the establishment of B-cell immortalization by acting as an EBNA2 coactivator. This transcriptional activation preferentially enhances the expression of the major viral protein LMP1. The interaction between EBNA-LP and host SP100 correlates with coactivation of EBNA2 and the relocalization of SP100 from PML nuclear bodies into nucleoplasm. In Epstein-Barr virus (strain B95-8) (HHV-4), this protein is Epstein-Barr nuclear antigen leader protein (EBNA-LP).